We begin with the raw amino-acid sequence, 500 residues long: Protein dcd1B (500 aa).

The first 20 residues, methionine 1 to serine 20, serve as a signal peptide directing secretion. N-linked (GlcNAc...) asparagine glycans are attached at residues asparagine 284, asparagine 331, asparagine 441, asparagine 459, asparagine 474, and asparagine 475. Residues phenylalanine 464–asparagine 500 form a disordered region. Over residues asparagine 475–asparagine 500 the composition is skewed to low complexity.

It localises to the secreted. This is Protein dcd1B (dcd1B) from Dictyostelium discoideum (Social amoeba).